The sequence spans 241 residues: Pyridoxine 5'-phosphate synthase (241 aa).

Asparagine 7 serves as a coordination point for 3-amino-2-oxopropyl phosphate. 1-deoxy-D-xylulose 5-phosphate is bound at residue aspartate 9–histidine 10. Arginine 18 lines the 3-amino-2-oxopropyl phosphate pocket. Histidine 43 functions as the Proton acceptor in the catalytic mechanism. Positions 45 and 50 each coordinate 1-deoxy-D-xylulose 5-phosphate. Glutamate 70 (proton acceptor) is an active-site residue. 1-deoxy-D-xylulose 5-phosphate is bound at residue threonine 100. Histidine 191 serves as the catalytic Proton donor. 3-amino-2-oxopropyl phosphate is bound by residues glycine 192 and glycine 213–histidine 214.

This sequence belongs to the PNP synthase family. As to quaternary structure, homooctamer; tetramer of dimers.

It localises to the cytoplasm. It carries out the reaction 3-amino-2-oxopropyl phosphate + 1-deoxy-D-xylulose 5-phosphate = pyridoxine 5'-phosphate + phosphate + 2 H2O + H(+). It participates in cofactor biosynthesis; pyridoxine 5'-phosphate biosynthesis; pyridoxine 5'-phosphate from D-erythrose 4-phosphate: step 5/5. In terms of biological role, catalyzes the complicated ring closure reaction between the two acyclic compounds 1-deoxy-D-xylulose-5-phosphate (DXP) and 3-amino-2-oxopropyl phosphate (1-amino-acetone-3-phosphate or AAP) to form pyridoxine 5'-phosphate (PNP) and inorganic phosphate. The protein is Pyridoxine 5'-phosphate synthase of Nitratidesulfovibrio vulgaris (strain ATCC 29579 / DSM 644 / CCUG 34227 / NCIMB 8303 / VKM B-1760 / Hildenborough) (Desulfovibrio vulgaris).